The chain runs to 130 residues: uncharacterized protein (130 aa).

Residues 1 to 18 form the signal peptide; it reads MVEVWWSLIGAAVPALIA.

This is an uncharacterized protein from Arabidopsis thaliana (Mouse-ear cress).